The primary structure comprises 972 residues: C-1-tetrahydrofolate synthase, mitochondrial (972 aa).

The transit peptide at 1–55 (MNVMVSFNQLRNYFLESNSLRPSKWLFQSYGTSSSANILNGKLLARKLQRSVAEE) directs the protein to the mitochondrion. The segment at 56–340 (VQALKAKDRN…DLNPLELKKP (285 aa)) is methylenetetrahydrofolate dehydrogenase and cyclohydrolase. Substrate-binding positions include 84-88 (YVRMK) and 131-133 (VQL). Residues 202–204 (GRS) and serine 227 each bind NADP(+). 299 to 303 (PGGVG) provides a ligand contact to substrate. Residues 341–972 (VPSDIEIANS…CENGEIVGLS (632 aa)) form a formyltetrahydrofolate synthetase region. 405–412 (TPFGEGKS) lines the ATP pocket.

In the N-terminal section; belongs to the tetrahydrofolate dehydrogenase/cyclohydrolase family. This sequence in the C-terminal section; belongs to the formate--tetrahydrofolate ligase family. In terms of assembly, homodimer.

It localises to the mitochondrion. It catalyses the reaction (6R)-5,10-methylene-5,6,7,8-tetrahydrofolate + NADP(+) = (6R)-5,10-methenyltetrahydrofolate + NADPH. It carries out the reaction (6R)-5,10-methenyltetrahydrofolate + H2O = (6R)-10-formyltetrahydrofolate + H(+). The catalysed reaction is (6S)-5,6,7,8-tetrahydrofolate + formate + ATP = (6R)-10-formyltetrahydrofolate + ADP + phosphate. The protein operates within one-carbon metabolism; tetrahydrofolate interconversion. Its function is as follows. Mitochondrial isozyme of C-1-tetrahydrofolate synthase. The trifunctional enzyme catalyzes the interconversion of the one-carbon derivatives of tetrahydrofolate (THF) between different oxidation states by the enzymatic activities 10-formyltetrahydrofolate synthetase, 5,lO-methenyltetrahydrofolate cyclohydrolase, and 5,lO-methylenetetrahydrofolate dehydrogenase. This Schizosaccharomyces pombe (strain 972 / ATCC 24843) (Fission yeast) protein is C-1-tetrahydrofolate synthase, mitochondrial (ade9).